Consider the following 2244-residue polypeptide: Multifunctional protein ura1 (2244 aa).

Positions 1–437 are GATase (Glutamine amidotransferase); sequence MSGLLPSLSS…GPRDTEFLFD (437 aa). The disordered stretch occupies residues 16-44; the sequence is QSEALGMPRTHGPKPSENDPKEPTCSPSP. Residues Ser-101, Gly-309, and Gly-311 each contribute to the L-glutamine site. The Glutamine amidotransferase type-1 domain maps to 264 to 449; sequence RILVIDVGMK…IDVVKRSADA (186 aa). Catalysis depends on Cys-338, which acts as the Nucleophile; for GATase activity. Residues Gln-342, Asn-380, Gly-382, and Tyr-383 each contribute to the L-glutamine site. Catalysis depends on for GATase activity residues His-422 and Glu-424. Positions 438 to 477 are linker; the sequence is VFIDVVKRSADAKSLQPFKLPGGTIEENRSRHPLVDAKRV. The tract at residues 478–1014 is CPSase A; the sequence is LILGSGGLSI…VEHDIHFNDK (537 aa). Residues 478–1514 form a CPSase (Carbamoyl phosphate synthase) region; it reads LILGSGGLSI…TNVKCAKLMI (1037 aa). ATP-binding residues include Arg-594, Arg-634, Gly-640, Gly-641, Arg-671, Met-673, Glu-678, Gly-704, Ile-705, His-706, Gln-747, and Glu-761. The ATP-grasp 1 domain maps to 598 to 790; it reads ARAMDEINEK…LAFTAAKLGL (193 aa). Positions 747, 761, and 763 each coordinate Mg(2+). Positions 747, 761, and 763 each coordinate Mn(2+). The CPSase B stretch occupies residues 1015-1514; sequence GVMVLGSGVY…TNVKCAKLMI (500 aa). At Ser-1119 the chain carries Phosphoserine. Residues 1133–1324 enclose the ATP-grasp 2 domain; it reads SRMLDDIGVD…MISMATDVIM (192 aa). Residues Arg-1169, Lys-1208, Ile-1210, Glu-1215, Gly-1240, Val-1241, His-1242, Ser-1243, Gln-1283, and Glu-1295 each contribute to the ATP site. Residues Gln-1283, Glu-1295, and Asn-1297 each coordinate Mg(2+). Residues Gln-1283, Glu-1295, and Asn-1297 each coordinate Mn(2+). In terms of domain architecture, MGS-like spans 1390 to 1552; that stretch reads FRLPKKNILI…INISAFLPEF (163 aa). The segment at 1515 to 1524 is linker; that stretch reads EAICRNLDFS. Residues 1525 to 1853 form a defective DHOase domain region; it reads LSTVDFQSSF…FDGHDVFFDG (329 aa). The interval 1854-1935 is linker; that stretch reads ELNFEHTYGR…VQLINSSPFY (82 aa). Residues Ser-1881 and Ser-1885 each carry the phosphoserine modification. Positions 1936 to 2244 are ATCase (Aspartate transcarbamylase); sequence RKHIISVHQV…CVMGATEVAN (309 aa). 2 residues coordinate carbamoyl phosphate: Arg-1988 and Thr-1989. Lys-2016 is an L-aspartate binding site. Arg-2037, His-2065, and Gln-2068 together coordinate carbamoyl phosphate. 2 residues coordinate L-aspartate: Arg-2098 and Arg-2160. 2 residues coordinate carbamoyl phosphate: Leu-2199 and Pro-2200.

The protein in the N-terminal section; belongs to the CarA family. It in the 2nd section; belongs to the CarB family. This sequence in the 3rd section; belongs to the metallo-dependent hydrolases superfamily. DHOase family. CAD subfamily. In the C-terminal section; belongs to the aspartate/ornithine carbamoyltransferase superfamily. ATCase family. Mg(2+) is required as a cofactor. Requires Mn(2+) as cofactor.

It catalyses the reaction hydrogencarbonate + L-glutamine + 2 ATP + H2O = carbamoyl phosphate + L-glutamate + 2 ADP + phosphate + 2 H(+). The catalysed reaction is L-glutamine + H2O = L-glutamate + NH4(+). The enzyme catalyses hydrogencarbonate + NH4(+) + 2 ATP = carbamoyl phosphate + 2 ADP + phosphate + 2 H(+). It carries out the reaction carbamoyl phosphate + L-aspartate = N-carbamoyl-L-aspartate + phosphate + H(+). It functions in the pathway pyrimidine metabolism; UMP biosynthesis via de novo pathway; (S)-dihydroorotate from bicarbonate: step 1/3. It participates in pyrimidine metabolism; UMP biosynthesis via de novo pathway; (S)-dihydroorotate from bicarbonate: step 2/3. Its activity is regulated as follows. Both CPSase and ATCase activities are feedback inhibited by the end product UTP. Its function is as follows. Multifunctional protein that encodes the first 2 enzymatic activities of the de novo pyrimidine pathway: carbamoylphosphate synthetase (CPSase; EC 6.3.5.5) and aspartate transcarbamylase (ATCase; EC 2.1.3.2). The CPSase-function is accomplished in 2 steps, by a glutamine-dependent amidotransferase activity (GATase) that binds and cleaves glutamine to produce ammonia, followed by an ammonium-dependent carbamoyl phosphate synthetase, which reacts with the ammonia, hydrogencarbonate and ATP to form carbamoyl phosphate. The endogenously produced carbamoyl phosphate is sequestered and channeled to the ATCase active site. ATCase then catalyzes the formation of carbamoyl-L-aspartate from L-aspartate and carbamoyl phosphate. This Schizosaccharomyces pombe (strain 972 / ATCC 24843) (Fission yeast) protein is Multifunctional protein ura1 (ura1).